Consider the following 179-residue polypeptide: ATP synthase subunit delta 2 (179 aa).

This sequence belongs to the ATPase delta chain family. F-type ATPases have 2 components, F(1) - the catalytic core - and F(0) - the membrane proton channel. F(1) has five subunits: alpha(3), beta(3), gamma(1), delta(1), epsilon(1). F(0) has three main subunits: a(1), b(2) and c(10-14). The alpha and beta chains form an alternating ring which encloses part of the gamma chain. F(1) is attached to F(0) by a central stalk formed by the gamma and epsilon chains, while a peripheral stalk is formed by the delta and b chains.

It localises to the cell inner membrane. Functionally, f(1)F(0) ATP synthase produces ATP from ADP in the presence of a proton or sodium gradient. F-type ATPases consist of two structural domains, F(1) containing the extramembraneous catalytic core and F(0) containing the membrane proton channel, linked together by a central stalk and a peripheral stalk. During catalysis, ATP synthesis in the catalytic domain of F(1) is coupled via a rotary mechanism of the central stalk subunits to proton translocation. In terms of biological role, this protein is part of the stalk that links CF(0) to CF(1). It either transmits conformational changes from CF(0) to CF(1) or is implicated in proton conduction. In Syntrophotalea carbinolica (strain DSM 2380 / NBRC 103641 / GraBd1) (Pelobacter carbinolicus), this protein is ATP synthase subunit delta 2.